The primary structure comprises 426 residues: Proline--tRNA ligase (426 aa).

It belongs to the class-II aminoacyl-tRNA synthetase family. ProS type 2 subfamily. In terms of assembly, homodimer.

The protein localises to the cytoplasm. The enzyme catalyses tRNA(Pro) + L-proline + ATP = L-prolyl-tRNA(Pro) + AMP + diphosphate. Catalyzes the attachment of proline to tRNA(Pro) in a two-step reaction: proline is first activated by ATP to form Pro-AMP and then transferred to the acceptor end of tRNA(Pro). The polypeptide is Proline--tRNA ligase (Ehrlichia ruminantium (strain Gardel)).